A 395-amino-acid polypeptide reads, in one-letter code: Small ribosomal subunit protein mS31 (395 aa).

A mitochondrion-targeting transit peptide spans 1–65 (MFPRVSTFLP…IQRYFGTNSV (65 aa)). Disordered regions lie at residues 70 to 97 (KDKQ…NTKK) and 175 to 196 (SELL…DAKR). Residues 183–196 (QHEEESRAQRDAKR) are compositionally biased toward basic and acidic residues.

The protein belongs to the mitochondrion-specific ribosomal protein mS31 family. As to quaternary structure, component of the mitochondrial small ribosomal subunit (mt-SSU). Mature mammalian 55S mitochondrial ribosomes consist of a small (28S) and a large (39S) subunit. The 28S small subunit contains a 12S ribosomal RNA (12S mt-rRNA) and 30 different proteins. The 39S large subunit contains a 16S rRNA (16S mt-rRNA), a copy of mitochondrial valine transfer RNA (mt-tRNA(Val)), which plays an integral structural role, and 52 different proteins.

The protein localises to the mitochondrion. The protein is Small ribosomal subunit protein mS31 (MRPS31) of Homo sapiens (Human).